We begin with the raw amino-acid sequence, 2588 residues long: Histone-lysine N-methyltransferase, H3 lysine-36 specific (2588 aa).

Ser-110 and Ser-118 each carry phosphoserine. Disordered regions lie at residues 209 to 264 (GSEQ…LGDT) and 277 to 307 (LSFQ…TSQE). Residues 235 to 249 (EKQKNKQRSEVDGSN) show a composition bias toward basic and acidic residues. Positions 298–307 (GTSSPSTSQE) are enriched in polar residues. A phosphoserine mark is found at Ser-380 and Ser-383. Residues 383–403 (SADEKEKPCAKSRVRKSSDNI) form a disordered region. Residue Lys-802 forms a Glycyl lysine isopeptide (Lys-Gly) (interchain with G-Cter in SUMO2) linkage. 3 disordered regions span residues 830–899 (ASYR…SDKR), 947–987 (ERKR…PGKE), and 1008–1133 (FDSK…PRLN). The segment covering 855–874 (GSSTPNSEKPGDSTQDSVHQ) has biased composition (polar residues). Low complexity predominate over residues 881 to 895 (SALSGELSSSLSSLA). The span at 1008 to 1033 (FDSKAKQSDPDKNLEKEPSFENRKGP) shows a compositional bias: basic and acidic residues. Over residues 1054–1073 (PKKRWQRLNQRRPKPGKRAN) the composition is skewed to basic residues. A Glycyl lysine isopeptide (Lys-Gly) (interchain with G-Cter in SUMO2) cross-link involves residue Lys-1237. Residues 1279–1324 (ASPRPALESEELLVKTPGNYESKRQRKPTKKLLESNDLDPGFMPKK) form a disordered region. Ser-1408 is subject to Phosphoserine. 3 PHD-type zinc fingers span residues 1441–1487 (ENVC…CHTG), 1488–1544 (IHTC…CHAA), and 1605–1649 (VSWC…CKAG). Residues 1654-1716 (YREIVWVKVG…QARVFPYMEG (63 aa)) enclose the PWWP domain. One can recognise an AWS domain in the interval 1788 to 1838 (SEIPRCNCKATDENPCGIDSECINRMLLYECHPTVCPAGVRCQNQCFSKRQ). The region spanning 1840–1957 (PDVEIFRTLQ…AGTELTFNYN (118 aa)) is the SET domain. S-adenosyl-L-methionine is bound by residues 1850–1852 (RGW), 1892–1895 (TNFY), 1918–1919 (NH), Asn-1963, and Lys-1969. The segment at 1958–1964 (LECLGNG) is inhibits enzyme activity in the absence of bound histone. The Post-SET domain occupies 1964-1980 (GKTVCKCGAPNCSGFLG). A disordered region spans residues 1989 to 2010 (VTEEKSRKFKRKPHGKRRSQGE). Residues 1995-2006 (RKFKRKPHGKRR) show a composition bias toward basic residues. Residues 2016-2063 (EDECFSCGDAGQLVSCKKPGCPKVYHADCLNLTKRPAGKWECPWHQCD) form a PHD-type 4; atypical zinc finger. Disordered stretches follow at residues 2105 to 2320 (PCGP…PPPE), 2333 to 2423 (KEKA…PSEH), 2447 to 2521 (YESA…WGLG), and 2560 to 2588 (RGQD…SEKK). The segment covering 2179–2196 (RPPERTDSSSHLLDRIRD) has biased composition (basic and acidic residues). Over residues 2201–2212 (GTKSQSLVSSQR) the composition is skewed to polar residues. Positions 2213–2223 (PQDRPPAKEGP) are enriched in basic and acidic residues. Residues 2232-2249 (SPMTRPSSSPSVSSLPLE) are compositionally biased toward low complexity. The span at 2250-2261 (RPLRMTDSRLDK) shows a compositional bias: basic and acidic residues. Phosphoserine is present on Ser-2267. Thr-2360 is modified (phosphothreonine). Residue Ser-2369 is modified to Phosphoserine. Lys-2509 participates in a covalent cross-link: Glycyl lysine isopeptide (Lys-Gly) (interchain with G-Cter in SUMO2).

The protein belongs to the class V-like SAM-binding methyltransferase superfamily. As to quaternary structure, interacts with AR DNA- and ligand-binding domains. Interacts with the ligand-binding domains of RARA and THRA in the absence of ligand; in the presence of ligand the interaction is severely disrupted but some binding still occurs. Interacts with the ligand-binding domains of RXRA and ESRRA only in the presence of ligand. Interacts with ZNF496. In terms of tissue distribution, expressed in the embryo and the outer region of the uterine decidua at early post-implantation 5.5 dpc stage. Uniformly expressed in embryonic and extraembryonic tissues during gastrulation stage 7.5 dpc. Expressed differentially after stage 14.5 dpc with highest expression in proliferating cells. Enriched in the telencephalic region of the brain, spinal cord, intestinal crypt, tooth buds, thymus and salivary glands at stage 16.5 dpc. Also expressed in the ossification region of developing bones and in the periosteum.

The protein resides in the nucleus. It is found in the chromosome. It catalyses the reaction L-lysyl(36)-[histone H3] + 2 S-adenosyl-L-methionine = N(6),N(6)-dimethyl-L-lysyl(36)-[histone H3] + 2 S-adenosyl-L-homocysteine + 2 H(+). Histone methyltransferase that dimethylates Lys-36 of histone H3 (H3K36me2). Transcriptional intermediary factor capable of negatively influencing transcription. May also positively influence transcription. Essential for early post-implantation development. This is Histone-lysine N-methyltransferase, H3 lysine-36 specific from Mus musculus (Mouse).